The primary structure comprises 353 residues: Mitochondrial distribution and morphology protein 10 (353 aa).

The protein belongs to the MDM10 family. As to quaternary structure, component of the ER-mitochondria encounter structure (ERMES) or MDM complex, composed of MMM1, MDM10, MDM12 and MDM34. Associates with the mitochondrial outer membrane sorting assembly machinery SAM(core) complex.

It localises to the mitochondrion outer membrane. Functionally, component of the ERMES/MDM complex, which serves as a molecular tether to connect the endoplasmic reticulum and mitochondria. Components of this complex are involved in the control of mitochondrial shape and protein biogenesis and may function in phospholipid exchange. MDM10 is involved in the late assembly steps of the general translocase of the mitochondrial outer membrane (TOM complex). Functions in the TOM40-specific route of the assembly of outer membrane beta-barrel proteins, including the association of TOM40 with the receptor TOM22 and small TOM proteins. Can associate with the SAM(core) complex as well as the MDM12-MMM1 complex, both involved in late steps of the major beta-barrel assembly pathway, that is responsible for biogenesis of all outer membrane beta-barrel proteins. May act as a switch that shuttles between both complexes and channels precursor proteins into the TOM40-specific pathway. Plays a role in mitochondrial morphology and in the inheritance of mitochondria. The protein is Mitochondrial distribution and morphology protein 10 of Yarrowia lipolytica (strain CLIB 122 / E 150) (Yeast).